We begin with the raw amino-acid sequence, 200 residues long: Peptidyl-tRNA hydrolase (200 aa).

Tyr15 contacts tRNA. The Proton acceptor role is filled by His20. Positions 66, 68, and 114 each coordinate tRNA.

The protein belongs to the PTH family. As to quaternary structure, monomer.

The protein localises to the cytoplasm. It catalyses the reaction an N-acyl-L-alpha-aminoacyl-tRNA + H2O = an N-acyl-L-amino acid + a tRNA + H(+). In terms of biological role, hydrolyzes ribosome-free peptidyl-tRNAs (with 1 or more amino acids incorporated), which drop off the ribosome during protein synthesis, or as a result of ribosome stalling. Its function is as follows. Catalyzes the release of premature peptidyl moieties from peptidyl-tRNA molecules trapped in stalled 50S ribosomal subunits, and thus maintains levels of free tRNAs and 50S ribosomes. The protein is Peptidyl-tRNA hydrolase of Paraburkholderia phytofirmans (strain DSM 17436 / LMG 22146 / PsJN) (Burkholderia phytofirmans).